The primary structure comprises 89 residues: Antimicrobial peptide Ar-AMP (89 aa).

Residues 1-25 (MVNMKSVALIVIVMMAFMMVDPSMG) form the signal peptide. The 43-residue stretch at 26–68 (AGECVQGRCPSGMCCSQFGYCGRGPKYCGRASTTVDHQADAAA) folds into the Chitin-binding type-1 domain. 3 disulfide bridges follow: C29-C40, C34-C46, and C39-C53. A propeptide spans 56–89 (ASTTVDHQADAAAAAATKTANNPTDAKLAGAGSP) (removed in mature form).

Chitin-binding protein that inhibits the growth of the fungal pathogens B.cinerea, F.culmorum, H.sativum and A.consortiale, but not that of R.solani. Induces morphological changes in the fungal pathogens F.culmorum, H.sativum and R.solani, but not in A.consortiale and B.cinerea. Has antibacterial activity against the Gram-positive bacterium B.subtilis, but lacks antibacterial activity against the Gram-negative bacterium E.coli. This is Antimicrobial peptide Ar-AMP from Amaranthus retroflexus (Redroot amaranth).